We begin with the raw amino-acid sequence, 1261 residues long: MKAADEPAYLTVGTDVSAKYRGAFCEAKIKTVKRLVKVKVLLKQDNTTQLVQDDQVKGPLRVGAIVETRTSDGSIQEAIISKLTDASWYTVVFDDGDERTLRRTSLCLKGERHFAESETLDQLPLTNPEHFGTPVIAKKTNRGRRSSLPITEDEKEEESSEEEDEDKRRLNDELLGKVVSVASTAESTGWYPALVVSPSCNDDVTVKKDQCLVRSFIDSKFYSIARKDIKELDILTLPESELCARPGLRRASVFLKGRIVPDNWKMDISEILESSSSDDEECPAEEHEEEKEKEAKKEEEELPEEELDPEERDNFLQQLYKFMEDRGTPINKPPVLGYKDLNLFKLFRLVYHQGGCGNIDSGAVWKQIYMDLGIPILNSAASYNVKTAYRKYLYGFEEYCRSANIQFRTIHHHEPKVKEEKKDFEDSMDEALKEAPEMPLLDVKSEPEENTDSNSESDREDTELKSPRGRRKIVRDANCIKKEIEEEKIEDKFLRDDLENKDAGDDDDDGDPAAKREHELLFGRKSTPKNKEKKIKKPEDSERDSDEEEEKSQEREETESRCDSEGEDEEDDTEPCLTGTKVKVKYGRGKTQKIYEASIKSTEMDDGEILYLVHYYGWNVRYDEWVKADRIIWPLDKGGPKKKQKKKVKNKEDSEKDEKRDEERQKSKRGRPPLKSTFSPNMPYSLSKTSNSEGKSDSCSSDSEADDQLEKSSGGEDLSPDVKEELEKNENAHDDKLDEENPKIVHISKENDRTQAQPSDTLTVEAGDSDQIVHIFGDKVDQVEEFKKQVEKSPKGKGRRSKTKDLSLELIKISPFGQEEAGSEAHGDVHSLEFSSLECKNFSSTEDDIDPYEKEKKLKRKILGQQSPEKKLRLDNGMEMTTGVSQERSDDGAGAEGMKGAHVEQHFETEGEGMPSLTAEPDQGLQELTSEKSDSPAEEEPVHTPLKEEEDAMPLIGPETLVCHEVDLDDLDEKDKTSIEDVVVEGSESNSLASVPPALPPVAQHNFSVASPLTLSQDESRSIKSESDITIEVDSIAEESQEGLCERESANGFEASVASGACSIIAHERESREKGQKRPSDGNSGLIAKKQKRTPKRTSAAAKTEKNGAGQSSDSEDLPAMDSSSNCTPVKRLTLPKSQKLPRSPARTSPHIKDAEKEKHREKHPNSSPRTYKWSFQLNELDNMNSTERISFLQEKLQEIRKYYMSLKSEVATIDRRRKRLKKKDREVSHAGASMSSASSDTGMSPSSSSPPQNVLAVECR.

The tract at residues 4 to 121 (ADEPAYLTVG…RHFAESETLD (118 aa)) is DNA-binding. Disordered regions lie at residues 142 to 169 (RGRR…DKRR), 273 to 310 (ESSS…LDPE), and 435 to 470 (APEM…PRGR). 2 stretches are compositionally biased toward acidic residues: residues 151–165 (TEDE…EEDE) and 276–289 (SSDD…EHEE). Residues 290–299 (EKEKEAKKEE) are compositionally biased toward basic and acidic residues. The segment covering 300 to 310 (EELPEEELDPE) has biased composition (acidic residues). An ARID domain is found at 309–401 (PEERDNFLQQ…YLYGFEEYCR (93 aa)). Residue lysine 481 forms a Glycyl lysine isopeptide (Lys-Gly) (interchain with G-Cter in SUMO2) linkage. 3 disordered regions span residues 498–582 (LENK…GTKV), 633–768 (WPLD…EAGD), and 842–953 (FSST…EDAM). Positions 512–522 (PAAKREHELLF) are enriched in basic and acidic residues. Over residues 526 to 536 (STPKNKEKKIK) the composition is skewed to basic residues. Acidic residues predominate over residues 541 to 551 (SERDSDEEEEK). Residues 552–564 (SQEREETESRCDS) show a composition bias toward basic and acidic residues. A compositionally biased stretch (acidic residues) spans 565–574 (EGEDEEDDTE). The Tudor-knot domain occupies 579-631 (GTKVKVKYGRGKTQKIYEASIKSTEMDDGEILYLVHYYGWNVRYDEWVKADRI). Positions 640 to 649 (PKKKQKKKVK) are enriched in basic residues. The segment covering 650–665 (NKEDSEKDEKRDEERQ) has biased composition (basic and acidic residues). Residues 676–689 (STFSPNMPYSLSKT) are compositionally biased toward polar residues. Serine 679 carries the post-translational modification Phosphoserine. A compositionally biased stretch (low complexity) spans 690 to 702 (SNSEGKSDSCSSD). A compositionally biased stretch (basic and acidic residues) spans 708-753 (QLEKSSGGEDLSPDVKEELEKNENAHDDKLDEENPKIVHISKENDR). The residue at position 719 (serine 719) is a Phosphoserine. Glycyl lysine isopeptide (Lys-Gly) (interchain with G-Cter in SUMO2) cross-links involve residues lysine 723 and lysine 743. Serine 867 carries the phosphoserine modification. 2 stretches are compositionally biased toward basic and acidic residues: residues 899–909 (KGAHVEQHFET) and 929–947 (TSEK…TPLK). Residues 955 to 968 (LIGPETLVCHEVDL) form a retinoblastoma protein binding region. Residues 1067 to 1080 (HERESREKGQKRPS) show a composition bias toward basic and acidic residues. Disordered regions lie at residues 1067–1173 (HERE…RTYK) and 1216–1261 (RRRK…VECR). Phosphoserine occurs at positions 1113 and 1149. Residues 1230–1252 (HAGASMSSASSDTGMSPSSSSPP) are compositionally biased toward low complexity.

In terms of assembly, identified in mSin3A corepressor complexes together with SIN3A, SIN3B, RBBP4, RBBP7, SAP30, BRMS1, HDAC1 and HDAC2. Interacts with BRMS1. Interacts with RB1. Interacts with ARID4B. Interacts with AR. In terms of tissue distribution, expressed in Sertoli cells of the testis.

It localises to the nucleus. Functionally, DNA-binding protein which modulates activity of several transcription factors including RB1 (retinoblastoma-associated protein) and AR (androgen receptor). May function as part of an mSin3A repressor complex. Has no intrinsic transcriptional activity. Plays a role in the regulation of epigenetic modifications at the PWS/AS imprinting center near the SNRPN promoter, where it might function as part of a complex with RB1 and ARID4B. Involved in spermatogenesis, together with ARID4B, where it acts as a transcriptional coactivator for AR and enhances expression of genes required for sperm maturation. Regulates expression of the tight junction protein CLDN3 in the testis, which is important for integrity of the blood-testis barrier. Plays a role in myeloid homeostasis where it regulates the histone methylation state of bone marrow cells and expression of various genes involved in hematopoiesis. May function as a leukemia suppressor. The protein is AT-rich interactive domain-containing protein 4A of Mus musculus (Mouse).